Here is a 2513-residue protein sequence, read N- to C-terminus: Probable polyketide synthase 7 (2513 aa).

Positions glutamate 11–glutamate 441 constitute a Ketosynthase family 3 (KS3) domain. Catalysis depends on for beta-ketoacyl synthase activity residues cysteine 181, histidine 323, and histidine 362. The acyl/malonyl transferase stretch occupies residues glycine 632 to tyrosine 665. The active-site For acyl/malonyl transferase activity is the serine 642. The interval isoleucine 922–asparagine 1044 is N-terminal hotdog fold. In terms of domain architecture, PKS/mFAS DH spans isoleucine 922–serine 1206. Histidine 956 acts as the Proton acceptor; for dehydratase activity in catalysis. The C-terminal hotdog fold stretch occupies residues asparagine 1061–serine 1206. Aspartate 1119 functions as the Proton donor; for dehydratase activity in the catalytic mechanism. The Carrier domain maps to isoleucine 2426 to leucine 2503. Serine 2463 is modified (O-(pantetheine 4'-phosphoryl)serine).

Requires pantetheine 4'-phosphate as cofactor.

Its function is as follows. Probable polyketide synthase. This is Probable polyketide synthase 7 (pks7) from Dictyostelium discoideum (Social amoeba).